The following is a 369-amino-acid chain: Small ribosomal subunit biogenesis GTPase RsgA (369 aa).

The 159-residue stretch at 88–246 folds into the CP-type G domain; it reads RTVLERPPVA…LADTPGFNQP (159 aa). GTP-binding positions include 137–140 and 188–196; these read NKQD and GPSGVGKSS. The Zn(2+) site is built by Cys271, Cys276, His278, and Cys284. A disordered region spans residues 307-369; that stretch reads QNPENSRETD…DLDNLQEDWE (63 aa). The span at 359–369 shows a compositional bias: acidic residues; that stretch reads TDLDNLQEDWE.

This sequence belongs to the TRAFAC class YlqF/YawG GTPase family. RsgA subfamily. As to quaternary structure, monomer. Associates with 30S ribosomal subunit, binds 16S rRNA. It depends on Zn(2+) as a cofactor.

The protein resides in the cytoplasm. Functionally, one of several proteins that assist in the late maturation steps of the functional core of the 30S ribosomal subunit. Helps release RbfA from mature subunits. May play a role in the assembly of ribosomal proteins into the subunit. Circularly permuted GTPase that catalyzes slow GTP hydrolysis, GTPase activity is stimulated by the 30S ribosomal subunit. This chain is Small ribosomal subunit biogenesis GTPase RsgA, found in Synechocystis sp. (strain ATCC 27184 / PCC 6803 / Kazusa).